The following is a 588-amino-acid chain: Pleckstrin homology domain-containing family A member 4 (588 aa).

Residues 54 to 153 (PVHIRGWLHK…WLRALGRASR (100 aa)) enclose the PH domain. Disordered regions lie at residues 155–349 (EGED…QASM) and 495–588 (AGLG…VDHL). S164 carries the phosphoserine modification. Residues 183-193 (VNRREEGRISE) show a composition bias toward basic and acidic residues. Over residues 211–222 (TPNSTVDLQTDT) the composition is skewed to polar residues. Composition is skewed to low complexity over residues 246-260 (PRPR…PLSA) and 321-334 (QRTQ…GSST). S562 carries the post-translational modification Phosphoserine.

It localises to the cytoplasm. The protein localises to the membrane. In terms of biological role, binds specifically to phosphatidylinositol 3-phosphate (PtdIns3P), but not to other phosphoinositides. This chain is Pleckstrin homology domain-containing family A member 4 (Plekha4), found in Mus musculus (Mouse).